The primary structure comprises 123 residues: Large ribosomal subunit protein bL19 (123 aa).

This sequence belongs to the bacterial ribosomal protein bL19 family.

In terms of biological role, this protein is located at the 30S-50S ribosomal subunit interface and may play a role in the structure and function of the aminoacyl-tRNA binding site. In Ureaplasma parvum serovar 3 (strain ATCC 27815 / 27 / NCTC 11736), this protein is Large ribosomal subunit protein bL19.